Here is a 315-residue protein sequence, read N- to C-terminus: Probable mannose-6-phosphate isomerase GmuF (315 aa).

Zn(2+) is bound by residues Gln95, His97, Glu115, and His172. Arg192 is a catalytic residue.

The protein belongs to the mannose-6-phosphate isomerase type 1 family. It depends on Zn(2+) as a cofactor.

It catalyses the reaction D-mannose 6-phosphate = D-fructose 6-phosphate. Its function is as follows. Seems to be involved in the degradation of glucomannan. The protein is Probable mannose-6-phosphate isomerase GmuF (gmuF) of Bacillus subtilis (strain 168).